The sequence spans 628 residues: Beta-galactosidase large subunit (628 aa).

The active-site Proton donor is Glu-468. Glu-536 acts as the Nucleophile in catalysis.

The protein belongs to the glycosyl hydrolase 2 family. As to quaternary structure, heterodimer of a large (LacL) and a small subunit (LacM).

The enzyme catalyses Hydrolysis of terminal non-reducing beta-D-galactose residues in beta-D-galactosides.. Its function is as follows. Component of a beta-galactosidase. The sequence is that of Beta-galactosidase large subunit from Lactobacillus helveticus (Lactobacillus suntoryeus).